The chain runs to 710 residues: Chloride channel protein CLC-e (710 aa).

Helical transmembrane passes span 74-94, 122-142, 164-184, 193-213, 222-242, 261-281, 296-316, 340-360, 379-399, 412-432, 451-471, and 472-492; these read ELAI…VVLF, IGSN…VVSI, VKAV…LGTG, SVEI…KSPQ, GSAA…FFAV, TTSM…IGLG, PGEL…SLAL, VFPV…PEVL, GLSA…TAWC, SLFI…LALA, GLVG…TAVL, and LLFE…AVGM. The interval 500–534 is disordered; it reads QSKRQETRETKETRKRKSQEAVQSLTSSDDESSTN. Over residues 502 to 511 the composition is skewed to basic and acidic residues; sequence KRQETRETKE. The span at 520–534 shows a compositional bias: polar residues; sequence AVQSLTSSDDESSTN. 2 consecutive CBS domains span residues 565–624 and 640–702; these read MRTR…GNNR and KCKV…ATRM. The chain crosses the membrane as a helical span at residues 667-687; sequence HVAVVSGSIDAPRIHPVGVLD.

The protein belongs to the chloride channel (TC 2.A.49) family. Homodimer.

It is found in the membrane. The catalysed reaction is 2 chloride(in) + H(+)(out) = 2 chloride(out) + H(+)(in). Voltage-gated thylakoid chloride (Cl) channel/transporter involved in chloride homeostasis after transition from light to dark. Influences chloroplast ultrastructure and subsequent photosynthetic electron transport. During photosynthetic response on transition from dark to low light, involved in a sequential mechanism of adaptation; VCCN1 and CLCe first trigger the activation of photoprotection, which is later down-regulated by KEA3 to a low steady state, while adjusting electron transport. Regulates photosynthesis by a pH-independent mechanism likely involving Cl(-) homeostasis. This is Chloride channel protein CLC-e from Arabidopsis thaliana (Mouse-ear cress).